The sequence spans 228 residues: Outer membrane protein assembly factor BamE (228 aa).

The N-terminal stretch at 1-29 (MNPILKGVYSPARLGVVALTLFGILGVTG) is a signal peptide. The N-palmitoyl cysteine moiety is linked to residue C30. C30 carries S-diacylglycerol cysteine lipidation. Positions 197 to 228 (DFFGSSKKDPDPQSPQLGPGTLNDVPKPADSK) are disordered.

This sequence belongs to the BamE family. As to quaternary structure, part of the Bam complex.

The protein localises to the cell outer membrane. Part of the outer membrane protein assembly complex, which is involved in assembly and insertion of beta-barrel proteins into the outer membrane. In Polynucleobacter necessarius subsp. necessarius (strain STIR1), this protein is Outer membrane protein assembly factor BamE.